Consider the following 272-residue polypeptide: Ribosomal RNA small subunit methyltransferase A (272 aa).

6 residues coordinate S-adenosyl-L-methionine: Asn-16, Leu-18, Gly-43, Glu-64, Asp-89, and Asn-110.

It belongs to the class I-like SAM-binding methyltransferase superfamily. rRNA adenine N(6)-methyltransferase family. RsmA subfamily.

Its subcellular location is the cytoplasm. It carries out the reaction adenosine(1518)/adenosine(1519) in 16S rRNA + 4 S-adenosyl-L-methionine = N(6)-dimethyladenosine(1518)/N(6)-dimethyladenosine(1519) in 16S rRNA + 4 S-adenosyl-L-homocysteine + 4 H(+). Its function is as follows. Specifically dimethylates two adjacent adenosines (A1518 and A1519) in the loop of a conserved hairpin near the 3'-end of 16S rRNA in the 30S particle. May play a critical role in biogenesis of 30S subunits. The protein is Ribosomal RNA small subunit methyltransferase A of Pseudomonas fluorescens (strain Pf0-1).